Consider the following 341-residue polypeptide: RNA 3'-terminal phosphate cyclase (341 aa).

Residues Gln102 and 283 to 287 contribute to the ATP site; that span reads HLADQ. The active-site Tele-AMP-histidine intermediate is His308.

Belongs to the RNA 3'-terminal cyclase family. Type 1 subfamily.

The protein resides in the cytoplasm. It catalyses the reaction a 3'-end 3'-phospho-ribonucleotide-RNA + ATP = a 3'-end 2',3'-cyclophospho-ribonucleotide-RNA + AMP + diphosphate. Catalyzes the conversion of 3'-phosphate to a 2',3'-cyclic phosphodiester at the end of RNA. The mechanism of action of the enzyme occurs in 3 steps: (A) adenylation of the enzyme by ATP; (B) transfer of adenylate to an RNA-N3'P to produce RNA-N3'PP5'A; (C) and attack of the adjacent 2'-hydroxyl on the 3'-phosphorus in the diester linkage to produce the cyclic end product. The biological role of this enzyme is unknown but it is likely to function in some aspects of cellular RNA processing. The chain is RNA 3'-terminal phosphate cyclase from Pseudomonas aeruginosa (strain UCBPP-PA14).